A 222-amino-acid chain; its full sequence is Triosephosphate isomerase (222 aa).

9–11 (NLK) is a substrate binding site. Catalysis depends on histidine 93, which acts as the Electrophile. Glutamate 141 (proton acceptor) is an active-site residue. Substrate contacts are provided by residues isoleucine 146, glycine 181, and 202–203 (AS).

The protein belongs to the triosephosphate isomerase family. As to quaternary structure, homotetramer; dimer of dimers.

The protein localises to the cytoplasm. The catalysed reaction is D-glyceraldehyde 3-phosphate = dihydroxyacetone phosphate. Its pathway is carbohydrate biosynthesis; gluconeogenesis. It participates in carbohydrate degradation; glycolysis; D-glyceraldehyde 3-phosphate from glycerone phosphate: step 1/1. Functionally, involved in the gluconeogenesis. Catalyzes stereospecifically the conversion of dihydroxyacetone phosphate (DHAP) to D-glyceraldehyde-3-phosphate (G3P). This Methanoculleus marisnigri (strain ATCC 35101 / DSM 1498 / JR1) protein is Triosephosphate isomerase.